The chain runs to 369 residues: GTPase Obg (369 aa).

Positions 1–158 (MFTDVVELTV…RRIKLDLKLI (158 aa)) constitute an Obg domain. Residues 126–146 (NTHFKSSTNQRPTYAQPGEKG) form a disordered region. Polar residues predominate over residues 128-138 (HFKSSTNQRPT). Residues 159-362 (ADVGLVGFPN…LKHALFNLVQ (204 aa)) form the OBG-type G domain. GTP is bound by residues 165–172 (GFPNVGKS), 190–194 (FTTLT), 212–215 (DIPG), 280–283 (TRAD), and 343–345 (SSA). 2 residues coordinate Mg(2+): Ser-172 and Thr-192.

It belongs to the TRAFAC class OBG-HflX-like GTPase superfamily. OBG GTPase family. Monomer. Requires Mg(2+) as cofactor.

The protein resides in the cytoplasm. In terms of biological role, an essential GTPase which binds GTP, GDP and possibly (p)ppGpp with moderate affinity, with high nucleotide exchange rates and a fairly low GTP hydrolysis rate. Plays a role in control of the cell cycle, stress response, ribosome biogenesis and in those bacteria that undergo differentiation, in morphogenesis control. The sequence is that of GTPase Obg from Sulfurimonas denitrificans (strain ATCC 33889 / DSM 1251) (Thiomicrospira denitrificans (strain ATCC 33889 / DSM 1251)).